The primary structure comprises 527 residues: Catalase (527 aa).

Residues 1 to 22 are compositionally biased toward basic and acidic residues; it reads MADNRDPASDQMKHWKEQRAAQ. The interval 1-32 is disordered; sequence MADNRDPASDQMKHWKEQRAAQKPDILTTGSG. Ala2 is subject to N-acetylalanine. Ser9 bears the Phosphoserine mark. Lys13 is subject to N6-succinyllysine. Residues His75 and Asn148 contribute to the active site. 4 residues coordinate NADP(+): His194, Ser201, Arg203, and Asn213. The residue at position 221 (Lys221) is an N6-succinyllysine. An N6-acetyllysine modification is found at Lys233. 3 residues coordinate NADP(+): Lys237, Trp303, and His305. Position 358 (Tyr358) interacts with heme. Phosphoserine occurs at positions 417 and 434. At Lys480 the chain carries N6-acetyllysine; alternate. An N6-succinyllysine; alternate modification is found at Lys480. At Lys499 the chain carries N6-acetyllysine. Residue Thr511 is modified to Phosphothreonine. Ser517 is subject to Phosphoserine. A Microbody targeting signal; atypical motif is present at residues 524-527; the sequence is KANL.

This sequence belongs to the catalase family. Homotetramer. Interacts (via microbody targeting signal) with PEX5, monomeric form interacts with PEX5, leading to its translocation into peroxisomes. Requires heme as cofactor. NADP(+) serves as cofactor.

Its subcellular location is the peroxisome matrix. The enzyme catalyses 2 H2O2 = O2 + 2 H2O. Functionally, catalyzes the degradation of hydrogen peroxide (H(2)O(2)) generated by peroxisomal oxidases to water and oxygen, thereby protecting cells from the toxic effects of hydrogen peroxide. Promotes growth of cells including T-cells, B-cells, myeloid leukemia cells, melanoma cells, mastocytoma cells and normal and transformed fibroblast cells. The polypeptide is Catalase (CAT) (Sus scrofa (Pig)).